We begin with the raw amino-acid sequence, 233 residues long: Type IV secretion system protein PtlE homolog (233 aa).

A helical membrane pass occupies residues 42–62 (VAWAALAVTALSLIAIATMLP).

Belongs to the virB8 family.

The protein localises to the cell inner membrane. This chain is Type IV secretion system protein PtlE homolog (ptlE), found in Bordetella bronchiseptica (strain ATCC BAA-588 / NCTC 13252 / RB50) (Alcaligenes bronchisepticus).